Here is a 231-residue protein sequence, read N- to C-terminus: Heptaprenylglyceryl phosphate synthase (231 aa).

K12 provides a ligand contact to sn-glycerol 1-phosphate. Mg(2+)-binding residues include D14 and T40. Residues 159–164 (YLEYSG), G189, and 209–210 (GN) each bind sn-glycerol 1-phosphate.

The protein belongs to the GGGP/HepGP synthase family. Group I subfamily. In terms of assembly, homodimer. Mg(2+) is required as a cofactor.

The catalysed reaction is sn-glycerol 1-phosphate + all-trans-heptaprenyl diphosphate = 3-heptaprenyl-sn-glycero-1-phosphate + diphosphate. It participates in membrane lipid metabolism; glycerophospholipid metabolism. In terms of biological role, prenyltransferase that catalyzes in vivo the transfer of the heptaprenyl moiety of heptaprenyl pyrophosphate (HepPP; 35 carbon atoms) to the C3 hydroxyl of sn-glycerol-1-phosphate (G1P), producing heptaprenylglyceryl phosphate (HepGP). This reaction is an ether-bond-formation step in the biosynthesis of archaea-type G1P-based membrane lipids found in Bacillales. This Staphylococcus haemolyticus (strain JCSC1435) protein is Heptaprenylglyceryl phosphate synthase.